A 148-amino-acid polypeptide reads, in one-letter code: Stathmin (148 aa).

In terms of domain architecture, SLD spans 4 to 145; the sequence is SDIQVKELEK…NKEGKDPGEA (142 aa). The residue at position 16 (serine 16) is a Phosphoserine; by PKA. Serine 38 bears the Phosphoserine; by CDK1 mark. Residues 41–140 are a coiled coil; it reads KKKDLSLEEI…EEVRKNKEGK (100 aa). Serine 63 carries the post-translational modification Phosphoserine; by PKA. The segment at 122 to 148 is disordered; that stretch reads RLREKDKHIEEVRKNKEGKDPGEAETN.

This sequence belongs to the stathmin family. Binds to two alpha/beta-tubulin heterodimers. In terms of processing, many different phosphorylated forms are observed depending on specific combinations among the sites which can be phosphorylated. MAPK is responsible for the phosphorylation of stathmin in response to NGF.

The protein resides in the cytoplasm. Its subcellular location is the cytoskeleton. Involved in the regulation of the microtubule (MT) filament system by destabilizing microtubules. It prevents assembly and promotes disassembly of microtubules. The protein is Stathmin (STMN1) of Gallus gallus (Chicken).